We begin with the raw amino-acid sequence, 146 residues long: Alpha-amylase inhibitor BMAI-1 (146 aa).

Residues 1–14 (PTSVAVDQGSMVSN) form the signal peptide. Asn125 carries N-linked (GlcNAc...) asparagine glycosylation.

This sequence belongs to the protease inhibitor I6 (cereal trypsin/alpha-amylase inhibitor) family. In terms of assembly, monomer. In terms of processing, five disulfide bonds, which are essential for the inhibitor activity, are probably present. Post-translationally, glycosylated. Endosperm.

It is found in the secreted. Could be involved in insect defense mechanisms. Inhibits insect-type alpha-amylase. The chain is Alpha-amylase inhibitor BMAI-1 (IAM1) from Hordeum vulgare (Barley).